The sequence spans 304 residues: MIKQRTPKKVIQATGVGLHSGEKVLLTLRPAPVNTGIVFRRVDLSPVVEIPASYEYVGDTMLCTTLHHGKVKIATVEHLLSALAGLGIDNAYIDVNAPEIPIMDGSAAPFVFLIQSAGIREQNAAKRYIRILKPIRVEENGKYVQFLPHKGYKITFTIGFEHPVFNDRPQTVSFDFSGTSYVKEVCRARTFGFLSDYEKLRECDLAKGGSLDNAIVVDDYRVLNEDGLRFESEFVTHKVLDAIGDLYLLGSSLIGAFEGYKSGHELNNRLLRELMIRQDAWEYTYFDTENYLPAVHPEYYPVEA.

Zn(2+) is bound by residues His78, His237, and Asp241. His264 functions as the Proton donor in the catalytic mechanism.

The protein belongs to the LpxC family. Zn(2+) serves as cofactor.

The catalysed reaction is a UDP-3-O-[(3R)-3-hydroxyacyl]-N-acetyl-alpha-D-glucosamine + H2O = a UDP-3-O-[(3R)-3-hydroxyacyl]-alpha-D-glucosamine + acetate. Its pathway is glycolipid biosynthesis; lipid IV(A) biosynthesis; lipid IV(A) from (3R)-3-hydroxytetradecanoyl-[acyl-carrier-protein] and UDP-N-acetyl-alpha-D-glucosamine: step 2/6. Functionally, catalyzes the hydrolysis of UDP-3-O-myristoyl-N-acetylglucosamine to form UDP-3-O-myristoylglucosamine and acetate, the committed step in lipid A biosynthesis. The protein is UDP-3-O-acyl-N-acetylglucosamine deacetylase of Legionella pneumophila (strain Lens).